We begin with the raw amino-acid sequence, 534 residues long: Lysophosphatidylcholine acyltransferase 1 (534 aa).

Residues 1–25 are disordered; it reads MRLRGRGPRAAPSSSSGAGDARRLA. Residues 1 to 57 are Cytoplasmic-facing; that stretch reads MRLRGRGPRAAPSSSSGAGDARRLAPPGRNPFVHELRLSALQKAQVAFMTLTLFPIR. The segment covering 8–19 has biased composition (low complexity); it reads PRAAPSSSSGAG. Residues 58-78 traverse the membrane as a helical; Signal-anchor for type II membrane protein segment; it reads LLFAAFMMLLAWPFALVASLG. Residues 79 to 534 lie on the Lumenal side of the membrane; it reads PPDKEPEQPL…GRKNSCKKVD (456 aa). Residues 135 to 140 carry the HXXXXD motif motif; the sequence is HSSYFD. EF-hand domains are found at residues 379-414 and 451-486; these read PVSD…VCRP and ISEL…YPDF. Ca(2+)-binding residues include D392, S394, E398, and E403. A Di-lysine motif motif is present at residues 531–534; sequence KKVD.

The protein belongs to the 1-acyl-sn-glycerol-3-phosphate acyltransferase family. As to expression, enriched in alveolar type II cells of lung. Also highly expressed in stomach.

The protein resides in the endoplasmic reticulum membrane. Its subcellular location is the golgi apparatus membrane. The protein localises to the cell membrane. It localises to the lipid droplet. The enzyme catalyses a 1-acyl-sn-glycero-3-phosphocholine + an acyl-CoA = a 1,2-diacyl-sn-glycero-3-phosphocholine + CoA. It carries out the reaction a 1-O-alkyl-sn-glycero-3-phosphocholine + acetyl-CoA = a 1-O-alkyl-2-acetyl-sn-glycero-3-phosphocholine + CoA. It catalyses the reaction a 1-acyl-sn-glycero-3-phosphate + an acyl-CoA = a 1,2-diacyl-sn-glycero-3-phosphate + CoA. The catalysed reaction is a 1-O-(1Z-alkenyl)-sn-glycero-3-phosphocholine + an acyl-CoA = a 1-O-(1Z-alkenyl)-2-acyl-sn-glycero-3-phosphocholine + CoA. The enzyme catalyses 1-acyl-sn-glycero-3-phospho-(1'-sn-glycerol) + an acyl-CoA = a 1,2-diacyl-sn-glycero-3-phospho-(1'-sn-glycerol) + CoA. It carries out the reaction a 1-acyl-sn-glycero-3-phosphocholine + hexadecanoyl-CoA = 1-acyl-2-hexadecanoyl-sn-glycero-3-phosphocholine + CoA. It catalyses the reaction a 1-acyl-sn-glycero-3-phosphate + hexadecanoyl-CoA = 1-acyl-2-hexadecanoyl-sn-glycero-3-phosphate + CoA. The catalysed reaction is 1-acyl-sn-glycero-3-phospho-(1'-sn-glycerol) + hexadecanoyl-CoA = 1-acyl-2-hexadecanoyl-sn-glycero-3-phospho-(1'-sn-glycerol) + CoA. The enzyme catalyses 1-hexadecanoyl-sn-glycero-3-phosphocholine + hexadecanoyl-CoA = 1,2-dihexadecanoyl-sn-glycero-3-phosphocholine + CoA. It carries out the reaction 1-O-hexadecyl-sn-glycero-3-phosphocholine + hexadecanoyl-CoA = 1-O-hexadecyl-2-hexadecanoyl-sn-glycero-3-phosphocholine + CoA. It catalyses the reaction a 1-O-(1Z-alkenyl)-sn-glycero-3-phosphocholine + hexadecanoyl-CoA = 1-O-(1Z)-alkenyl-2-hexadecanoyl-sn-glycero-3-phosphocholine + CoA. The catalysed reaction is 1-hexadecanoyl-sn-glycero-3-phospho-(1'-sn-glycerol) + hexadecanoyl-CoA = 1,2-dihexadecanoyl-sn-glycero-3-phospho-(1'-sn-glycerol) + CoA. The enzyme catalyses 1-dodecanoyl-sn-glycero-3-phosphocholine + hexadecanoyl-CoA = 1-dodecanoyl-2-hexadecanoyl-sn-glycero-3-phosphocholine + CoA. It carries out the reaction 1-tetradecanoyl-sn-glycero-3-phosphocholine + hexadecanoyl-CoA = 1-tetradecanoyl-2-hexadecanoyl-sn-glycero-3-phosphocholine + CoA. It catalyses the reaction 1-O-octadecyl-sn-glycero-3-phosphocholine + hexadecanoyl-CoA = 1-O-octadecyl-2-hexadecanoyl-sn-glycero-3-phosphocholine + CoA. The catalysed reaction is 1-octadecanoyl-sn-glycero-3-phosphocholine + hexadecanoyl-CoA = 1-octadecanoyl-2-hexadecanoyl-sn-glycero-3-phosphocholine + CoA. The enzyme catalyses 1-(9Z-octadecenoyl)-sn-glycero-3-phosphocholine + hexadecanoyl-CoA = 1-(9Z-octadecenoyl)-2-hexadecanoyl-sn-glycero-3-phosphocholine + CoA. It carries out the reaction 1-eicosanoyl-sn-glycero-3-phosphocholine + hexadecanoyl-CoA = 1-eicosanoyl-2-hexadecanoyl-sn-glycero-3-phosphocholine + CoA. It catalyses the reaction hexanoyl-CoA + 1-hexadecanoyl-sn-glycero-3-phosphocholine = 1-hexadecanoyl-2-hexanoyl-sn-glycero-3-phosphocholine + CoA. The catalysed reaction is octanoyl-CoA + 1-hexadecanoyl-sn-glycero-3-phosphocholine = 1-hexadecanoyl-2-octanoyl-sn-glycero-3-phosphocholine + CoA. The enzyme catalyses decanoyl-CoA + 1-hexadecanoyl-sn-glycero-3-phosphocholine = 1-hexadecanoyl-2-decanoyl-sn-glycero-3-phosphocholine + CoA. It carries out the reaction dodecanoyl-CoA + 1-hexadecanoyl-sn-glycero-3-phosphocholine = 1-hexadecanoyl-2-dodecanoyl-sn-glycero-3-phosphocholine + CoA. It catalyses the reaction tetradecanoyl-CoA + 1-hexadecanoyl-sn-glycero-3-phosphocholine = 1-hexadecanoyl-2-tetradecanoyl-sn-glycero-3-phosphocholine + CoA. The catalysed reaction is 1-hexadecanoyl-sn-glycero-3-phosphocholine + (9Z)-octadecenoyl-CoA = 1-hexadecanoyl-2-(9Z-octadecenoyl)-sn-glycero-3-phosphocholine + CoA. The enzyme catalyses (9Z,12Z)-octadecadienoyl-CoA + 1-hexadecanoyl-sn-glycero-3-phosphocholine = 1-hexadecanoyl-2-(9Z,12Z-octadecadienoyl)-sn-glycero-3-phosphocholine + CoA. It carries out the reaction (4Z,7Z,10Z,13Z,16Z,19Z)-docosahexaenoyl-CoA + 1-hexadecanoyl-sn-glycero-3-phosphocholine = 1-hexadecanoyl-2-(4Z,7Z,10Z,13Z,16Z,19Z-docosahexaenoyl)-sn-glycero-3-phosphocholine + CoA. It catalyses the reaction 1-hexadecanoyl-sn-glycero-3-phosphocholine + acetyl-CoA = 1-hexadecanoyl-2-acetyl-sn-glycero-3-phosphocholine + CoA. The catalysed reaction is eicosanoyl-CoA + 1-hexadecanoyl-sn-glycero-3-phosphocholine = 1-hexadecanoyl-2-eicosanoyl-sn-glycero-3-phosphocholine + CoA. The enzyme catalyses 1-O-hexadecyl-sn-glycero-3-phosphocholine + acetyl-CoA = 1-O-hexadecyl-2-acetyl-sn-glycero-3-phosphocholine + CoA. It functions in the pathway lipid metabolism; phospholipid metabolism. Activity is stimulated by Mg(2+) or Mn(2+). Functionally, exhibits acyltransferase activity. Exhibits acetyltransferase activity. Activity is calcium-independent. Catalyzes the conversion of lysophosphatidylcholine (1-acyl-sn-glycero-3-phosphocholine or LPC) into phosphatidylcholine (1,2-diacyl-sn-glycero-3-phosphocholine or PC). Catalyzes the conversion 1-acyl-sn-glycerol-3-phosphate (lysophosphatidic acid or LPA) into 1,2-diacyl-sn-glycerol-3-phosphate (phosphatidic acid or PA) by incorporating an acyl moiety at the sn-2 position of the glycerol backbone. Displays a clear preference for saturated fatty acyl-CoAs, and 1-myristoyl or 1-palmitoyl LPC as acyl donors and acceptors, respectively. Involved in platelet-activating factor (PAF) biosynthesis by catalyzing the conversion of the PAF precursor, 1-O-alkyl-sn-glycero-3-phosphocholine (lyso-PAF) into 1-O-alkyl-2-acetyl-sn-glycero-3-phosphocholine (PAF). May synthesize phosphatidylcholine in pulmonary surfactant, thereby playing a pivotal role in respiratory physiology. Involved in the regulation of lipid droplet number and size. The sequence is that of Lysophosphatidylcholine acyltransferase 1 (Lpcat1) from Rattus norvegicus (Rat).